We begin with the raw amino-acid sequence, 324 residues long: Glutathione synthetase (324 aa).

An ATP-grasp domain is found at 125–312; that stretch reads EKLFTTTHFP…ISTIILDNLE (188 aa). 152–209 is a binding site for ATP; sequence FIKTYKDIIIKPLHGMAGLSIFRIKEHDPNTSVIIETMTKYETIPCISQNYITDIQKG. Positions 283 and 285 each coordinate Mg(2+).

The protein belongs to the prokaryotic GSH synthase family. It depends on Mg(2+) as a cofactor. Mn(2+) is required as a cofactor.

The enzyme catalyses gamma-L-glutamyl-L-cysteine + glycine + ATP = glutathione + ADP + phosphate + H(+). It participates in sulfur metabolism; glutathione biosynthesis; glutathione from L-cysteine and L-glutamate: step 2/2. The sequence is that of Glutathione synthetase from Buchnera aphidicola subsp. Baizongia pistaciae (strain Bp).